Consider the following 316-residue polypeptide: Calumenin-B (316 aa).

The signal sequence occupies residues 1–19; that stretch reads MELRPLVMCFALCVVYASS. EF-hand domains follow at residues 69-104, 105-140, 152-187, 189-224, 230-265, and 266-301; these read ESKERLGMLVERIDEDKDGYVSVEEMKKWIKHSQKR, WIYDDVDRQWKGHDHNGDGLVSWEEYKNATYGYILD, QMISRDERRFKMSDLDADLKANKEEFTAFLHPEEYD, MKDIVVLETMEDIDKNGDGFIDLEEYIGDMYNQEGD, WVRTEREQFTEFRDTNKDGRMDKEETKDWILPSDYD, and HAEAEAKHLVYESDNDKDGKLTKAEIVEKYDLFVGS. The Ca(2+) site is built by aspartate 82, aspartate 84, aspartate 86, tyrosine 88, glutamate 93, aspartate 118, asparagine 120, aspartate 122, and glutamate 129. Asparagine 132 carries an N-linked (GlcNAc...) asparagine glycan. Positions 165, 167, 169, 171, 176, 202, 204, 206, 213, 243, 245, 247, 249, 254, 279, 281, 283, 285, and 290 each coordinate Ca(2+). The Prevents secretion from ER motif lies at 313 to 316; sequence HDEF.

Belongs to the CREC family. Interacts with ggcx.

The protein localises to the endoplasmic reticulum membrane. It is found in the golgi apparatus. Its subcellular location is the secreted. The protein resides in the melanosome. It localises to the sarcoplasmic reticulum lumen. In terms of biological role, involved in regulation of vitamin K-dependent carboxylation of multiple N-terminal glutamate residues. Seems to inhibit gamma-carboxylase ggcx. Binds 7 calcium ions with a low affinity. The sequence is that of Calumenin-B (calub) from Salmo salar (Atlantic salmon).